A 296-amino-acid chain; its full sequence is Acetylglutamate kinase (296 aa).

Residues 71-72 (GG), Arg93, and Asn186 contribute to the substrate site.

This sequence belongs to the acetylglutamate kinase family. ArgB subfamily.

The protein resides in the cytoplasm. It carries out the reaction N-acetyl-L-glutamate + ATP = N-acetyl-L-glutamyl 5-phosphate + ADP. It functions in the pathway amino-acid biosynthesis; L-arginine biosynthesis; N(2)-acetyl-L-ornithine from L-glutamate: step 2/4. Catalyzes the ATP-dependent phosphorylation of N-acetyl-L-glutamate. In Synechococcus sp. (strain RCC307), this protein is Acetylglutamate kinase.